Consider the following 813-residue polypeptide: Striatin-interacting protein 1 homolog (813 aa).

Disordered regions lie at residues 1 to 41 (MDGV…SEAP) and 307 to 379 (RAAS…RDEV). The segment covering 9-18 (NNKQKQNQML) has biased composition (polar residues). The span at 22–35 (MRGEFTRNQRKDSE) shows a compositional bias: basic and acidic residues. Over residues 307 to 316 (RAASPPASAS) the composition is skewed to low complexity. Position 310 is a phosphoserine (S310). Residues 331–352 (KALIKQDNLDTFNEKDPYKADD) show a composition bias toward basic and acidic residues. Over residues 353–367 (SHEDEEENDDNDNSL) the composition is skewed to acidic residues.

It belongs to the STRIP family. As to quaternary structure, part of the core of STRIPAK complexes composed of PP2A catalytic and scaffolding subunits, the striatins (PP2A regulatory subunits), the striatin-associated proteins MOB4, STRIP1 and STRIP2, PDCD10 and members of the STE20 kinases, such as STK24 and STK26.

It localises to the cytoplasm. In terms of biological role, plays a role in the regulation of cell morphology and cytoskeletal organization. Required in the cortical actin filament dynamics and cell shape. Part of the striatin-interacting phosphatase and kinase (STRIPAK) complexes. STRIPAK complexes have critical roles in protein (de)phosphorylation and are regulators of multiple signaling pathways including Hippo, MAPK, nuclear receptor and cytoskeleton remodeling. Different types of STRIPAK complexes are involved in a variety of biological processes such as cell growth, differentiation, apoptosis, metabolism and immune regulation. The polypeptide is Striatin-interacting protein 1 homolog (strip1) (Danio rerio (Zebrafish)).